Consider the following 453-residue polypeptide: Allantoinase (453 aa).

Zn(2+) contacts are provided by His59, His61, Lys146, His186, His242, and Asp315. Lys146 is subject to N6-carboxylysine.

This sequence belongs to the metallo-dependent hydrolases superfamily. Allantoinase family. Homotetramer. Zn(2+) serves as cofactor. Carboxylation allows a single lysine to coordinate two zinc ions.

It carries out the reaction (S)-allantoin + H2O = allantoate + H(+). Its pathway is nitrogen metabolism; (S)-allantoin degradation; allantoate from (S)-allantoin: step 1/1. In terms of biological role, catalyzes the conversion of allantoin (5-ureidohydantoin) to allantoic acid by hydrolytic cleavage of the five-member hydantoin ring. The sequence is that of Allantoinase from Salmonella gallinarum (strain 287/91 / NCTC 13346).